The chain runs to 150 residues: Large ribosomal subunit protein bL9 (150 aa).

The protein belongs to the bacterial ribosomal protein bL9 family.

Its function is as follows. Binds to the 23S rRNA. The chain is Large ribosomal subunit protein bL9 from Burkholderia multivorans (strain ATCC 17616 / 249).